The following is a 390-amino-acid chain: 8-amino-7-oxononanoate synthase (390 aa).

Residue R19 coordinates substrate. 106–107 (GY) serves as a coordination point for pyridoxal 5'-phosphate. H131 lines the substrate pocket. The pyridoxal 5'-phosphate site is built by S176, H204, and T233. K236 carries the post-translational modification N6-(pyridoxal phosphate)lysine. T350 serves as a coordination point for substrate.

The protein belongs to the class-II pyridoxal-phosphate-dependent aminotransferase family. BioF subfamily. Homodimer. Requires pyridoxal 5'-phosphate as cofactor.

The enzyme catalyses 6-carboxyhexanoyl-[ACP] + L-alanine + H(+) = (8S)-8-amino-7-oxononanoate + holo-[ACP] + CO2. Its pathway is cofactor biosynthesis; biotin biosynthesis. Functionally, catalyzes the decarboxylative condensation of pimeloyl-[acyl-carrier protein] and L-alanine to produce 8-amino-7-oxononanoate (AON), [acyl-carrier protein], and carbon dioxide. The chain is 8-amino-7-oxononanoate synthase from Pseudomonas putida (strain ATCC 47054 / DSM 6125 / CFBP 8728 / NCIMB 11950 / KT2440).